A 231-amino-acid polypeptide reads, in one-letter code: uncharacterized protein (231 aa).

An NADP(+)-binding site is contributed by 10–34; it reads VVTGAGSGIGEAIATLLHEEGAKVV. Serine 140 contacts substrate. Tyrosine 153 acts as the Proton acceptor in catalysis.

It belongs to the short-chain dehydrogenases/reductases (SDR) family.

This is an uncharacterized protein from Staphylococcus aureus (strain COL).